The primary structure comprises 105 residues: Large ribosomal subunit protein eL33 (105 aa).

It belongs to the eukaryotic ribosomal protein eL33 family.

Functionally, the protein was found to bind to both initiator and elongator tRNAs and consequently was assigned to the P site or P and A site. This Dictyostelium discoideum (Social amoeba) protein is Large ribosomal subunit protein eL33 (rpl35a).